The following is a 918-amino-acid chain: Cap-specific mRNA (nucleoside-2'-O-)-methyltransferase 1 (918 aa).

Positions 1-18 (MADRKSDEGEDEYQHKEQ) are enriched in basic and acidic residues. 2 disordered regions span residues 1–56 (MADR…EERA) and 62–81 (KRGYQAGDDEEDDFTAEEEP). Positions 19-30 (MVTNRTSSFQPK) are enriched in polar residues. Basic and acidic residues predominate over residues 43–56 (RAADRREEFMEERA). Over residues 68–80 (GDDEEDDFTAEEE) the composition is skewed to acidic residues. One can recognise a G-patch domain in the interval 86-132 (PLTVAERLMAAMGHKAGEGLGKHGQGISEPIASSTQRGRTGLGHNAG). Residues 236-465 (FFQNRAAMKT…ERYITCKGLR (230 aa)) enclose the RrmJ-type SAM-dependent 2'-O-MTase domain. 2 residues coordinate S-adenosyl-L-methionine: glycine 298 and aspartate 379. Lysine 419 acts as the Proton acceptor in catalysis.

It carries out the reaction a 5'-end (N(7)-methyl 5'-triphosphoguanosine)-ribonucleoside in mRNA + S-adenosyl-L-methionine = a 5'-end (N(7)-methyl 5'-triphosphoguanosine)-(2'-O-methyl-ribonucleoside) in mRNA + S-adenosyl-L-homocysteine + H(+). Its function is as follows. S-adenosyl-L-methionine-dependent methyltransferase that mediates mRNA cap1 2'-O-ribose methylation to the 5'-cap structure of mRNAs. Methylates the ribose of the first nucleotide of a m(7)GpppG-capped mRNA to produce m(7)GpppNmp (cap1). Cap1 modification is linked to higher levels of translation. The chain is Cap-specific mRNA (nucleoside-2'-O-)-methyltransferase 1 from Caenorhabditis elegans.